Reading from the N-terminus, the 343-residue chain is tRNA-specific 2-thiouridylase MnmA (343 aa).

ATP is bound by residues 7 to 14 (ALSGGVDS) and methionine 33. The active-site Nucleophile is the cysteine 87. An intrachain disulfide couples cysteine 87 to cysteine 184. Glycine 111 contributes to the ATP binding site. The interaction with tRNA stretch occupies residues 135–137 (KDQ). The active-site Cysteine persulfide intermediate is cysteine 184. Residues 289–290 (RY) are interaction with tRNA.

It belongs to the MnmA/TRMU family.

The protein resides in the cytoplasm. The catalysed reaction is S-sulfanyl-L-cysteinyl-[protein] + uridine(34) in tRNA + AH2 + ATP = 2-thiouridine(34) in tRNA + L-cysteinyl-[protein] + A + AMP + diphosphate + H(+). Catalyzes the 2-thiolation of uridine at the wobble position (U34) of tRNA, leading to the formation of s(2)U34. This is tRNA-specific 2-thiouridylase MnmA from Desulforudis audaxviator (strain MP104C).